A 126-amino-acid chain; its full sequence is Ribosome-binding factor A (126 aa).

The protein belongs to the RbfA family. In terms of assembly, monomer. Binds 30S ribosomal subunits, but not 50S ribosomal subunits or 70S ribosomes.

It localises to the cytoplasm. Its function is as follows. One of several proteins that assist in the late maturation steps of the functional core of the 30S ribosomal subunit. Associates with free 30S ribosomal subunits (but not with 30S subunits that are part of 70S ribosomes or polysomes). Required for efficient processing of 16S rRNA. May interact with the 5'-terminal helix region of 16S rRNA. This is Ribosome-binding factor A from Treponema pallidum (strain Nichols).